The following is a 237-amino-acid chain: RNA chaperone ProQ (237 aa).

The segment at 106–188 is disordered; it reads AKARVQAQRA…QPRPVPVTDI (83 aa). A compositionally biased stretch (basic and acidic residues) spans 146 to 158; it reads PRREAGAAPENRK.

It belongs to the ProQ family.

Its subcellular location is the cytoplasm. RNA chaperone with significant RNA binding, RNA strand exchange and RNA duplexing activities. May regulate ProP activity through an RNA-based, post-transcriptional mechanism. This Yersinia pseudotuberculosis serotype O:1b (strain IP 31758) protein is RNA chaperone ProQ.